The sequence spans 275 residues: Chemotaxis protein methyltransferase 1 (275 aa).

A CheR-type methyltransferase domain is found at 1–275 (MTAITISDQE…CNPGIIYKLK (275 aa)). S-adenosyl-L-methionine contacts are provided by residues Asn76, Thr78, Arg82, Glu117, Asp145, 201–202 (NL), and 218–219 (RN).

The catalysed reaction is L-glutamyl-[protein] + S-adenosyl-L-methionine = [protein]-L-glutamate 5-O-methyl ester + S-adenosyl-L-homocysteine. Its function is as follows. Methylation of the membrane-bound methyl-accepting chemotaxis proteins (MCP) to form gamma-glutamyl methyl ester residues in MCP. This Vibrio cholerae serotype O1 (strain ATCC 39315 / El Tor Inaba N16961) protein is Chemotaxis protein methyltransferase 1 (cheR1).